The sequence spans 228 residues: uncharacterized protein (228 aa).

Residues 90 to 115 (TDESEESSSANNTTTTASHTLSNSKK) form a disordered region. A compositionally biased stretch (low complexity) spans 96–113 (SSSANNTTTTASHTLSNS).

The protein resides in the cytoplasm. It localises to the cell cortex. Its function is as follows. Deletion results in antifungal drug fluconazole-resistant phenotype. This is an uncharacterized protein from Saccharomyces cerevisiae (strain ATCC 204508 / S288c) (Baker's yeast).